The sequence spans 158 residues: Putative ribosomal RNA large subunit methyltransferase H (158 aa).

Residues Leu76, Gly107, and Leu126–Phe131 each bind S-adenosyl-L-methionine.

It belongs to the RNA methyltransferase RlmH family.

The protein resides in the cytoplasm. The catalysed reaction is pseudouridine(1915) in 23S rRNA + S-adenosyl-L-methionine = N(3)-methylpseudouridine(1915) in 23S rRNA + S-adenosyl-L-homocysteine + H(+). In terms of biological role, specifically methylates the pseudouridine at position 1915 (m3Psi1915) in 23S rRNA. This chain is Putative ribosomal RNA large subunit methyltransferase H, found in Methanocorpusculum labreanum (strain ATCC 43576 / DSM 4855 / Z).